Consider the following 256-residue polypeptide: 1-(5-phosphoribosyl)-5-[(5-phosphoribosylamino)methylideneamino] imidazole-4-carboxamide isomerase (256 aa).

Aspartate 8 (proton acceptor) is an active-site residue. The active-site Proton donor is aspartate 130.

This sequence belongs to the HisA/HisF family.

Its subcellular location is the cytoplasm. The enzyme catalyses 1-(5-phospho-beta-D-ribosyl)-5-[(5-phospho-beta-D-ribosylamino)methylideneamino]imidazole-4-carboxamide = 5-[(5-phospho-1-deoxy-D-ribulos-1-ylimino)methylamino]-1-(5-phospho-beta-D-ribosyl)imidazole-4-carboxamide. It participates in amino-acid biosynthesis; L-histidine biosynthesis; L-histidine from 5-phospho-alpha-D-ribose 1-diphosphate: step 4/9. The protein is 1-(5-phosphoribosyl)-5-[(5-phosphoribosylamino)methylideneamino] imidazole-4-carboxamide isomerase of Chlorobium phaeovibrioides (strain DSM 265 / 1930) (Prosthecochloris vibrioformis (strain DSM 265)).